A 1503-amino-acid polypeptide reads, in one-letter code: Lysine-specific demethylase 5B-B (1503 aa).

In terms of domain architecture, JmjN spans 15–56; the sequence is CPVFEPSWEEFKDPFAFINKIRPIAEKTGICKVRPPPDWQPP. The ARID domain maps to 80 to 170; it reads TRVKLNFLDQ…ILYPYNLFQS (91 aa). Polar residues predominate over residues 202-211; that stretch reads VPLQPSNTSA. 2 disordered regions span residues 202–223 and 268–287; these read VPLQ…KTES and IKEL…NIPP. The segment covering 268–278 has biased composition (basic and acidic residues); that stretch reads IKELNPEPEKS. The PHD-type 1 zinc-finger motif lies at 295 to 345; the sequence is LYVCLVCGKGNDEDRLLLCDGCDDSYHTFCLIPPLTDVPKGDWRCPKCLTQ. The JmjC domain maps to 439-605; it reads KYLQCGWNLN…LGRQCVDHYR (167 aa). Fe cation-binding residues include H485, D488, and H573. Residues 1168–1216 form a PHD-type 2 zinc finger; sequence LKVCVCQKPAMGAMLQCELCRDAFHSVCVRGPSDPLDPEAWLCPLCLRS. 2 disordered regions span residues 1362 to 1381 and 1403 to 1442; these read TNTS…TETD and ERGT…DSEE. The PHD-type 3 zinc finger occupies 1444 to 1497; that stretch reads MTLCPAESCLQPEGEEVDWVQCDCCNRWFHMICVGVSAELAAEEDYMCVSCSTS.

The protein belongs to the JARID1 histone demethylase family. Requires Fe(2+) as cofactor.

The protein resides in the nucleus. The enzyme catalyses N(6),N(6),N(6)-trimethyl-L-lysyl(4)-[histone H3] + 3 2-oxoglutarate + 3 O2 = L-lysyl(4)-[histone H3] + 3 formaldehyde + 3 succinate + 3 CO2. Functionally, histone demethylase that demethylates 'Lys-4' of histone H3, thereby playing a central role in histone code. Does not demethylate histone H3 'Lys-9' or H3 'Lys-27'. Demethylates trimethylated, dimethylated and monomethylated H3 'Lys-4'. Acts as a transcriptional corepressor. This Danio rerio (Zebrafish) protein is Lysine-specific demethylase 5B-B (kdm5bb).